An 87-amino-acid polypeptide reads, in one-letter code: MDKQEKSLIINEFKKSENDTGSTEVQVALLTARIHQLTTHMIANKHDFHTKRSLLTLVGRRRRLLSYMRNNNGAGYQELIANLGLRK.

It belongs to the universal ribosomal protein uS15 family. In terms of assembly, part of the 30S ribosomal subunit. Forms a bridge to the 50S subunit in the 70S ribosome, contacting the 23S rRNA.

Its function is as follows. One of the primary rRNA binding proteins, it binds directly to 16S rRNA where it helps nucleate assembly of the platform of the 30S subunit by binding and bridging several RNA helices of the 16S rRNA. Forms an intersubunit bridge (bridge B4) with the 23S rRNA of the 50S subunit in the ribosome. This chain is Small ribosomal subunit protein uS15, found in Dehalococcoides mccartyi (strain ATCC BAA-2266 / KCTC 15142 / 195) (Dehalococcoides ethenogenes (strain 195)).